A 359-amino-acid polypeptide reads, in one-letter code: DNA replication and repair protein RecF (359 aa).

30–37 (GANGSGKT) serves as a coordination point for ATP.

It belongs to the RecF family.

Its subcellular location is the cytoplasm. Functionally, the RecF protein is involved in DNA metabolism; it is required for DNA replication and normal SOS inducibility. RecF binds preferentially to single-stranded, linear DNA. It also seems to bind ATP. The polypeptide is DNA replication and repair protein RecF (Vibrio atlanticus (strain LGP32) (Vibrio splendidus (strain Mel32))).